A 167-amino-acid chain; its full sequence is Large ribosomal subunit protein uL23 (167 aa).

A large ribosomal subunit protein uL23 region spans residues methionine 1–lysine 118. Disordered regions lie at residues phenylalanine 91–lysine 112 and lysine 136–asparagine 167. Basic and acidic residues-rich tracts occupy residues glutamine 97–lysine 112 and lysine 136–asparagine 157. The segment at lysine 119–asparagine 167 is unknown. Positions glutamine 158–asparagine 167 are enriched in polar residues.

The protein belongs to the universal ribosomal protein uL23 family. In terms of assembly, part of the 50S ribosomal subunit. Contacts protein L29, and trigger factor when it is bound to the ribosome.

One of the early assembly proteins it binds 23S rRNA. One of the proteins that surrounds the polypeptide exit tunnel on the outside of the ribosome. Forms the main docking site for trigger factor binding to the ribosome. The chain is Large ribosomal subunit protein uL23 from Mesomycoplasma hyopneumoniae (strain J / ATCC 25934 / NCTC 10110) (Mycoplasma hyopneumoniae).